The primary structure comprises 340 residues: Glycerol-3-phosphate dehydrogenase [NAD(P)+] (340 aa).

NADPH contacts are provided by Ser-11, Trp-12, Arg-33, and Lys-106. Sn-glycerol 3-phosphate contacts are provided by Lys-106, Gly-137, and Ser-139. Ala-141 is a binding site for NADPH. Residues Lys-192, Asp-245, Ser-255, Arg-256, and Asn-257 each contribute to the sn-glycerol 3-phosphate site. Lys-192 (proton acceptor) is an active-site residue. Arg-256 is an NADPH binding site. Residues Val-280 and Glu-282 each contribute to the NADPH site.

Belongs to the NAD-dependent glycerol-3-phosphate dehydrogenase family.

It localises to the cytoplasm. The enzyme catalyses sn-glycerol 3-phosphate + NAD(+) = dihydroxyacetone phosphate + NADH + H(+). The catalysed reaction is sn-glycerol 3-phosphate + NADP(+) = dihydroxyacetone phosphate + NADPH + H(+). It functions in the pathway membrane lipid metabolism; glycerophospholipid metabolism. Functionally, catalyzes the reduction of the glycolytic intermediate dihydroxyacetone phosphate (DHAP) to sn-glycerol 3-phosphate (G3P), the key precursor for phospholipid synthesis. The sequence is that of Glycerol-3-phosphate dehydrogenase [NAD(P)+] from Bacillus cereus (strain 03BB102).